The following is a 260-amino-acid chain: Thiazole synthase (260 aa).

Catalysis depends on Lys100, which acts as the Schiff-base intermediate with DXP. Residues Gly161, 187-188 (AG), and 209-210 (NT) each bind 1-deoxy-D-xylulose 5-phosphate.

It belongs to the ThiG family. Homotetramer. Forms heterodimers with either ThiH or ThiS.

It localises to the cytoplasm. It catalyses the reaction [ThiS sulfur-carrier protein]-C-terminal-Gly-aminoethanethioate + 2-iminoacetate + 1-deoxy-D-xylulose 5-phosphate = [ThiS sulfur-carrier protein]-C-terminal Gly-Gly + 2-[(2R,5Z)-2-carboxy-4-methylthiazol-5(2H)-ylidene]ethyl phosphate + 2 H2O + H(+). Its pathway is cofactor biosynthesis; thiamine diphosphate biosynthesis. Functionally, catalyzes the rearrangement of 1-deoxy-D-xylulose 5-phosphate (DXP) to produce the thiazole phosphate moiety of thiamine. Sulfur is provided by the thiocarboxylate moiety of the carrier protein ThiS. In vitro, sulfur can be provided by H(2)S. This Dechloromonas aromatica (strain RCB) protein is Thiazole synthase.